Here is a 380-residue protein sequence, read N- to C-terminus: Flap endonuclease 1 (380 aa).

The tract at residues 1 to 104 is N-domain; that stretch reads MGIHGLAKLI…AELEKRGERR (104 aa). Mg(2+) is bound at residue aspartate 34. Positions 47 and 70 each coordinate DNA. Aspartate 86, glutamate 158, glutamate 160, aspartate 179, and aspartate 181 together coordinate Mg(2+). Positions 122-253 are I-domain; that stretch reads NIDKFSKRLV…KRAIDLIRQH (132 aa). Glutamate 158 lines the DNA pocket. 2 residues coordinate DNA: glycine 231 and aspartate 233. Aspartate 233 contributes to the Mg(2+) binding site. Residues 327–380 are disordered; sequence KMMKSRQGSTQGRLDSFFSVTGSLSSKRKEPETKGSAKKKQKTGATPGKFRKGK. Positions 332–351 are enriched in polar residues; the sequence is RQGSTQGRLDSFFSVTGSLS. Positions 336–344 are interaction with PCNA; it reads TQGRLDSFF.

It belongs to the XPG/RAD2 endonuclease family. FEN1 subfamily. Interacts with PCNA. Three molecules of fen1 bind to one PCNA trimer with each molecule binding to one PCNA monomer. PCNA stimulates the nuclease activity without altering cleavage specificity. Mg(2+) is required as a cofactor. Post-translationally, phosphorylated. Phosphorylation upon DNA damage induces relocalization to the nuclear plasma.

The protein resides in the nucleus. Its subcellular location is the nucleolus. It is found in the nucleoplasm. The protein localises to the mitochondrion. In terms of biological role, structure-specific nuclease with 5'-flap endonuclease and 5'-3' exonuclease activities involved in DNA replication and repair. During DNA replication, cleaves the 5'-overhanging flap structure that is generated by displacement synthesis when DNA polymerase encounters the 5'-end of a downstream Okazaki fragment. It enters the flap from the 5'-end and then tracks to cleave the flap base, leaving a nick for ligation. Also involved in the long patch base excision repair (LP-BER) pathway, by cleaving within the apurinic/apyrimidinic (AP) site-terminated flap. Acts as a genome stabilization factor that prevents flaps from equilibrating into structures that lead to duplications and deletions. Also possesses 5'-3' exonuclease activity on nicked or gapped double-stranded DNA, and exhibits RNase H activity. Also involved in replication and repair of rDNA and in repairing mitochondrial DNA. The protein is Flap endonuclease 1 (fen1) of Xiphophorus maculatus (Southern platyfish).